A 206-amino-acid polypeptide reads, in one-letter code: Adenylyl-sulfate kinase (206 aa).

Residue 31–38 participates in ATP binding; it reads GLSASGKS. Residue Ser-105 is the Phosphoserine intermediate of the active site.

The protein belongs to the APS kinase family.

The catalysed reaction is adenosine 5'-phosphosulfate + ATP = 3'-phosphoadenylyl sulfate + ADP + H(+). The protein operates within sulfur metabolism; hydrogen sulfide biosynthesis; sulfite from sulfate: step 2/3. Its function is as follows. Catalyzes the synthesis of activated sulfate. This is Adenylyl-sulfate kinase (sD) from Emericella nidulans (strain FGSC A4 / ATCC 38163 / CBS 112.46 / NRRL 194 / M139) (Aspergillus nidulans).